The chain runs to 192 residues: Xanthine phosphoribosyltransferase (192 aa).

Residues Leu-20 and Asn-27 each coordinate xanthine. 5-phospho-alpha-D-ribose 1-diphosphate is bound at residue 128-132 (AHGEA). Lys-156 serves as a coordination point for xanthine.

Belongs to the purine/pyrimidine phosphoribosyltransferase family. Xpt subfamily. In terms of assembly, homodimer.

It is found in the cytoplasm. The enzyme catalyses XMP + diphosphate = xanthine + 5-phospho-alpha-D-ribose 1-diphosphate. It functions in the pathway purine metabolism; XMP biosynthesis via salvage pathway; XMP from xanthine: step 1/1. Its function is as follows. Converts the preformed base xanthine, a product of nucleic acid breakdown, to xanthosine 5'-monophosphate (XMP), so it can be reused for RNA or DNA synthesis. The sequence is that of Xanthine phosphoribosyltransferase from Lactobacillus johnsonii (strain CNCM I-12250 / La1 / NCC 533).